The sequence spans 158 residues: MILLKLYLTLAAILCQSRGTTSLDLDDLMTTNPEIQNEIINKHNDLRRTVDPPAKNMLKMSWDNTIAESAKRAALRCNQNEHTPVSGRTIGGVVCGENYFMSSNLRTWSFGIQSWFDERNYFKFGFGPTRAGVMVGHYTQVVWYKSYKMGCAINLCPN.

The signal sequence occupies residues 1–22 (MILLKLYLTLAAILCQSRGTTS). The SCP domain maps to 41–158 (NKHNDLRRTV…MGCAINLCPN (118 aa)). A disulfide bond links Cys-77 and Cys-156.

It belongs to the CRISP family. Post-translationally, contains 8 disulfide bonds. In terms of tissue distribution, expressed by the venom gland.

The protein localises to the secreted. Functionally, blocks ryanodine receptors, and potassium channels. The protein is Cysteine-rich venom protein VAR7 of Varanus acanthurus (Ridge-tailed monitor).